Reading from the N-terminus, the 273-residue chain is Ribosomal RNA small subunit methyltransferase A (273 aa).

The S-adenosyl-L-methionine site is built by Asn-18, Leu-20, Gly-45, Glu-66, Asp-91, and Asn-113.

This sequence belongs to the class I-like SAM-binding methyltransferase superfamily. rRNA adenine N(6)-methyltransferase family. RsmA subfamily.

The protein resides in the cytoplasm. It catalyses the reaction adenosine(1518)/adenosine(1519) in 16S rRNA + 4 S-adenosyl-L-methionine = N(6)-dimethyladenosine(1518)/N(6)-dimethyladenosine(1519) in 16S rRNA + 4 S-adenosyl-L-homocysteine + 4 H(+). Its function is as follows. Specifically dimethylates two adjacent adenosines (A1518 and A1519) in the loop of a conserved hairpin near the 3'-end of 16S rRNA in the 30S particle. May play a critical role in biogenesis of 30S subunits. This Escherichia coli O139:H28 (strain E24377A / ETEC) protein is Ribosomal RNA small subunit methyltransferase A.